The following is a 428-amino-acid chain: Phosphoribosylamine--glycine ligase (428 aa).

The region spanning 107-313 is the ATP-grasp domain; the sequence is KQVMKTYNIP…LVNVIESLLD (207 aa). 133–194 is a binding site for ATP; the sequence is VEAEGVPIVI…EEYLEGEELS (62 aa). Residues glutamate 283 and asparagine 285 each coordinate Mg(2+).

The protein belongs to the GARS family. Mg(2+) serves as cofactor. It depends on Mn(2+) as a cofactor.

It catalyses the reaction 5-phospho-beta-D-ribosylamine + glycine + ATP = N(1)-(5-phospho-beta-D-ribosyl)glycinamide + ADP + phosphate + H(+). Its pathway is purine metabolism; IMP biosynthesis via de novo pathway; N(1)-(5-phospho-D-ribosyl)glycinamide from 5-phospho-alpha-D-ribose 1-diphosphate: step 2/2. This Halalkalibacterium halodurans (strain ATCC BAA-125 / DSM 18197 / FERM 7344 / JCM 9153 / C-125) (Bacillus halodurans) protein is Phosphoribosylamine--glycine ligase.